A 442-amino-acid chain; its full sequence is Glycoprotein endo-alpha-1,2-mannosidase-like protein (442 aa).

Residues 1–8 are Cytoplasmic-facing; it reads MNRLRRKA. The chain crosses the membrane as a helical; Signal-anchor for type II membrane protein span at residues 9–29; it reads CVALLLFTLFIFGTMMGLRTL. Over 30 to 442 the chain is Lumenal; it reads KPTDGFSDLA…FSKEKEQWLM (413 aa).

Belongs to the glycosyl hydrolase 99 family.

It is found in the golgi apparatus membrane. This chain is Glycoprotein endo-alpha-1,2-mannosidase-like protein (maneal), found in Danio rerio (Zebrafish).